Consider the following 419-residue polypeptide: Histidine--tRNA ligase (419 aa).

Belongs to the class-II aminoacyl-tRNA synthetase family. Homodimer.

It localises to the cytoplasm. The catalysed reaction is tRNA(His) + L-histidine + ATP = L-histidyl-tRNA(His) + AMP + diphosphate + H(+). This is Histidine--tRNA ligase from Mycoplasmoides gallisepticum (strain R(low / passage 15 / clone 2)) (Mycoplasma gallisepticum).